The primary structure comprises 1142 residues: Collagen alpha-1(XIX) chain (1142 aa).

A signal peptide spans 1–23 (MRLTGPWKLWLWMSIFLLPASTS). Residues 50–234 (NKLEVSGFDL…LHQLKIYCSA (185 aa)) form the Laminin G-like domain. Disordered regions lie at residues 288–680 (IPNK…GDPI), 704–1009 (PGLK…PGIP), and 1053–1142 (YGRP…TGGN). Collagen-like domains follow at residues 292 to 349 (GEAG…GEKG), 350 to 391 (DPAL…ALPG), and 392 to 433 (SLGI…GIQG). The tract at residues 292–351 (GEAGLPGAPGSPGQKGHKGEPGENGLHGAPGFPGQKGEQGFEGSKGETGEKGEQGEKGDP) is triple-helical region 1 (COL1). A compositionally biased stretch (basic and acidic residues) spans 335–350 (SKGETGEKGEQGEKGD). The interval 370-429 (GPPGPKGEKGDTGPPGPPALPGSLGIQGPQGPPGKEGQRGRRGKTGPPGKPGPPGPPGPP) is triple-helical region 2 (COL2). The span at 390 to 404 (PGSLGIQGPQGPPGK) shows a compositional bias: low complexity. Positions 417 to 429 (PGKPGPPGPPGPP) are enriched in pro residues. Basic and acidic residues-rich tracts occupy residues 444 to 463 (KDNKGNDEHEAGGLKGDKGE) and 478 to 496 (QKGEPGEPFTKGEKGDRGE). The segment at 448–688 (GNDEHEAGGL…PIALPLLGDI (241 aa)) is triple-helical region 3 (COL3). 8 Collagen-like domains span residues 474-516 (GPKG…GPPG), 568-624 (GPPG…GPQG), 626-678 (GIPG…PPGD), 728-778 (KGDI…APGP), 779-814 (TGPPGLMGRTGHPGPTGAKGEKGSDGPPGKPGPPGP), 845-903 (GPPG…VPGE), 904-947 (PGER…GDRG), and 948-1004 (PKGE…GSPG). Low complexity predominate over residues 640-651 (PGIQGPRGLPGL). The interval 700-818 (QASVPGLKSN…PGPPGPPGIP (119 aa)) is triple-helical region 4 (COL4). Composition is skewed to basic and acidic residues over residues 720-731 (GKYDSMARKGDI) and 743-752 (EGPKGSKGER). 2 stretches are compositionally biased toward pro residues: residues 806–817 (PGKPGPPGPPGI) and 840–852 (YPGPPGPPGPKGD). The triple-helical region 5 (COL5) stretch occupies residues 833-1012 (GGVNVPSYPG…PGIPGIPADA (180 aa)). Residues 943–954 (PGDRGPKGERGD) show a composition bias toward basic and acidic residues. Positions 952–954 (RGD) match the Cell attachment site motif. The triple-helical region 6 (COL6) stretch occupies residues 1054 to 1111 (GRPGPPGKDGLPGPPGDPGPQGYRGQKGERGEPGIGLPGSPGLPGTSALGLPGSPGAP). Residues 1093-1107 (SPGLPGTSALGLPGS) are compositionally biased toward low complexity. Residues 1108 to 1119 (PGAPGPQGPPGP) are compositionally biased toward pro residues.

Belongs to the fibril-associated collagens with interrupted helices (FACIT) family. Oligomer; disulfide-linked. Post-translationally, prolines at the third position of the tripeptide repeating unit (G-X-Y) are hydroxylated in some or all of the chains. Localized to vascular, neuronal, mesenchymal, and some epithelial basement membrane zones in umbilical cord.

The protein localises to the secreted. It is found in the extracellular space. The protein resides in the extracellular matrix. In terms of biological role, may act as a cross-bridge between fibrils and other extracellular matrix molecules. Involved in skeletal myogenesis in the developing esophagus. May play a role in organization of the pericellular matrix or the sphinteric smooth muscle. This is Collagen alpha-1(XIX) chain (COL19A1) from Homo sapiens (Human).